Here is a 47-residue protein sequence, read N- to C-terminus: Accessory gland peptide Acp33A (47 aa).

The first 21 residues, 1-21 (MLPSKRVPFLFTIILFLAGLG), serve as a signal peptide directing secretion.

In terms of tissue distribution, main cells of accessory gland and seminal fluid.

The protein localises to the secreted. In terms of biological role, responsible for physiological and behavioral changes in mated female flies. This Drosophila melanogaster (Fruit fly) protein is Accessory gland peptide Acp33A (Acp33A).